The sequence spans 291 residues: Methionine aminopeptidase (291 aa).

Position 118 (histidine 118) interacts with substrate. The a divalent metal cation site is built by aspartate 135, aspartate 146, and histidine 209. Position 216 (histidine 216) interacts with substrate. A divalent metal cation is bound by residues glutamate 241 and glutamate 273.

The protein belongs to the peptidase M24A family. Methionine aminopeptidase type 1 subfamily. Monomer. Co(2+) is required as a cofactor. The cofactor is Zn(2+). It depends on Mn(2+) as a cofactor. Fe(2+) serves as cofactor.

It catalyses the reaction Release of N-terminal amino acids, preferentially methionine, from peptides and arylamides.. Removes the N-terminal methionine from nascent proteins. The N-terminal methionine is often cleaved when the second residue in the primary sequence is small and uncharged (Met-Ala-, Cys, Gly, Pro, Ser, Thr, or Val). Requires deformylation of the N(alpha)-formylated initiator methionine before it can be hydrolyzed. The protein is Methionine aminopeptidase of Chlamydia pneumoniae (Chlamydophila pneumoniae).